A 439-amino-acid chain; its full sequence is Protein PHYTOCHROME KINASE SUBSTRATE 1 (439 aa).

Residues 1-14 show a composition bias toward polar residues; that stretch reads MVTLTPSSASTPKT. Disordered stretches follow at residues 1–22, 54–80, and 100–139; these read MVTL…MKNN, KTLN…APED, and QGSS…SSWN. The segment covering 63 to 79 has biased composition (basic and acidic residues); sequence KQEEFGDEKKMVKKAPE. Composition is skewed to polar residues over residues 100-109 and 118-139; these read QGSSVLSLTN and DSKQ…SSWN. 2 positions are modified to phosphoserine: Ser-238 and Ser-244. Disordered stretches follow at residues 259–311 and 355–439; these read LPLP…PTCY and TAKS…LYSQ. Residues 412–421 show a composition bias toward basic and acidic residues; the sequence is TKPKSFETRR. Positions 424–439 are enriched in low complexity; the sequence is SNSSISHTQSSLLYSQ.

The protein belongs to the PKS family. Interacts with PKS2, RPT3, PHOT1, PHOT2 and the C-termini of both phytochromes A (phyA) and B (phyB). Binds both spectral forms of phytochrome, Pr and Pfr. In terms of processing, phosphorylated on Ser and to a lower extent on Thr by phytochromes. Phosphorylation is stimulated twofold by red light. In terms of tissue distribution, expressed in young seedlings in both darkness and light. Moderate in leaves and very low in roots and flowers. Expressed in the elongation zone of the root and hypocotyl.

It localises to the cell membrane. Functionally, may be responsible for light-regulated cytoplasmic sequestration of phytochromes or may be a negative regulator of phytochrome B signaling. Component of the network that modulates the very low-fluence response (VLFR) branch of phyA signaling. Acts positively in PHOT1 signaling. Regulates phytochrome-mediated photomorphogenesis and hypocotyl phototropism. Involved in the control of leaf flattening and leaf positioning. Promotes negative root phototropism and negatively regulates root gravitropism. May act by controlling auxin homeostasis. This is Protein PHYTOCHROME KINASE SUBSTRATE 1 (PKS1) from Arabidopsis thaliana (Mouse-ear cress).